A 1676-amino-acid chain; its full sequence is Protein TIC 214 (1676 aa).

Helical transmembrane passes span 23 to 43, 71 to 91, 96 to 116, 145 to 165, 179 to 199, and 226 to 246; these read AGPLIILGIYYGFLITLPIAP, GILIAAISGLTVSQLAFFLSI, LYMIWLKPHLLTLLVLPYMFF, AFLDSFLFQALNPVLLPSPVM, VSLFILGTAIGWLGGQIMFVL, and IFPPIVFGLCLAYMGRAPVSF.

Belongs to the TIC214 family. In terms of assembly, part of the Tic complex.

It localises to the plastid. It is found in the chloroplast inner membrane. Its function is as follows. Involved in protein precursor import into chloroplasts. May be part of an intermediate translocation complex acting as a protein-conducting channel at the inner envelope. This chain is Protein TIC 214, found in Zygnema circumcarinatum (Green alga).